The chain runs to 532 residues: Protein kinase domain-containing protein ppk9 (532 aa).

Positions 23 to 274 (WLLGRTLGQG…VAEIMQHPWF (252 aa)) constitute a Protein kinase domain. ATP contacts are provided by residues 29-37 (LGQGNLAKV) and Lys52. The Proton acceptor role is filled by Asp145. The span at 316–346 (PSSSVGQIPQPTDHSALSPSKPMSISGTESP) shows a compositional bias: polar residues. Positions 316–349 (PSSSVGQIPQPTDHSALSPSKPMSISGTESPNPD) are disordered.

The protein resides in the cytoplasm. It localises to the nucleus. Its subcellular location is the cytoskeleton. The protein localises to the microtubule organizing center. It is found in the spindle pole body. The protein is Protein kinase domain-containing protein ppk9 (ppk9) of Schizosaccharomyces pombe (strain 972 / ATCC 24843) (Fission yeast).